The following is a 174-amino-acid chain: Repair DNA polymerase X (174 aa).

Residues 42–51 are involved in ssDNA binding; that stretch reads REEKMLNDVD. Mg(2+)-binding residues include Asp49 and Asp51. Cys81 and Cys86 are oxidised to a cystine. Asp100 contributes to the Mg(2+) binding site.

It belongs to the DNA polymerase type-X family. Mg(2+) serves as cofactor.

The protein localises to the virion. It carries out the reaction DNA(n) + a 2'-deoxyribonucleoside 5'-triphosphate = DNA(n+1) + diphosphate. In terms of biological role, error-prone polymerase lacking a proofreading 3'-5' exonuclease which catalyzes the gap-filling reaction during the DNA repair process. Specifically binds intermediates in the single-nucleotide base-excision repair process. Also catalyzes DNA polymerization with low nucleotide-insertion fidelity. Probably acts as a strategic DNA mutase, which gives rise to a rapid emergence of variants. Generates mismatched G-G pairs, in that case, the polymerase first binds the deoxynucleotide followed by mismatch formation. Together with the viral DNA ligase, fills the single nucleotide gaps generated by the AP endonuclease. Binds DNA with high affinity via the helix alphaE. The polypeptide is Repair DNA polymerase X (African swine fever virus (isolate Tick/South Africa/Pretoriuskop Pr4/1996) (ASFV)).